Here is a 458-residue protein sequence, read N- to C-terminus: Exodeoxyribonuclease 7 large subunit (458 aa).

This sequence belongs to the XseA family. Heterooligomer composed of large and small subunits.

The protein resides in the cytoplasm. The catalysed reaction is Exonucleolytic cleavage in either 5'- to 3'- or 3'- to 5'-direction to yield nucleoside 5'-phosphates.. In terms of biological role, bidirectionally degrades single-stranded DNA into large acid-insoluble oligonucleotides, which are then degraded further into small acid-soluble oligonucleotides. This Sodalis glossinidius (strain morsitans) protein is Exodeoxyribonuclease 7 large subunit.